The following is a 191-amino-acid chain: uncharacterized protein (191 aa).

This is an uncharacterized protein from Treponema pallidum (strain Nichols).